The chain runs to 431 residues: Mevalonate kinase (431 aa).

ATP-binding positions include K13, S139, and 144–150 (GAGLGSS). Positions 150 and 198 each coordinate Mg(2+). The Proton acceptor role is filled by D209.

The protein belongs to the GHMP kinase family. Mevalonate kinase subfamily. As to quaternary structure, homodimer.

The protein resides in the cytoplasm. The protein localises to the cytosol. The enzyme catalyses (R)-mevalonate + ATP = (R)-5-phosphomevalonate + ADP + H(+). It functions in the pathway isoprenoid biosynthesis; isopentenyl diphosphate biosynthesis via mevalonate pathway; isopentenyl diphosphate from (R)-mevalonate: step 1/3. Its function is as follows. Mevalonate kinase; part of the second module of ergosterol biosynthesis pathway that includes the middle steps of the pathway. ERG12 converts mevalonate into 5-phosphomevalonate. The second module is carried out in the vacuole and involves the formation of farnesyl diphosphate, which is also an important intermediate in the biosynthesis of ubiquinone, dolichol, heme and prenylated proteins. Activity by the mevalonate kinase ERG12 first converts mevalonate into 5-phosphomevalonate. 5-phosphomevalonate is then further converted to 5-diphosphomevalonate by the phosphomevalonate kinase ERG8. The diphosphomevalonate decarboxylase MVD then produces isopentenyl diphosphate. The isopentenyl-diphosphate delta-isomerase IDI1 then catalyzes the 1,3-allylic rearrangement of the homoallylic substrate isopentenyl (IPP) to its highly electrophilic allylic isomer, dimethylallyl diphosphate (DMAPP). Finally the farnesyl diphosphate synthase ERG20 catalyzes the sequential condensation of isopentenyl pyrophosphate with dimethylallyl pyrophosphate, and then with the resultant geranylpyrophosphate to the ultimate product farnesyl pyrophosphate. The protein is Mevalonate kinase of Candida albicans (strain SC5314 / ATCC MYA-2876) (Yeast).